We begin with the raw amino-acid sequence, 355 residues long: Anthranilate phosphoribosyltransferase (355 aa).

5-phospho-alpha-D-ribose 1-diphosphate-binding positions include Gly-102, 105–106 (GD), Ser-110, 112–115 (NIST), 130–138 (KHGNRSVSS), and Ser-142. Gly-102 is a binding site for anthranilate. Residue Ser-114 coordinates Mg(2+). Residue Asn-133 coordinates anthranilate. Arg-188 is an anthranilate binding site. Positions 246 and 247 each coordinate Mg(2+).

This sequence belongs to the anthranilate phosphoribosyltransferase family. Homodimer. It depends on Mg(2+) as a cofactor.

The enzyme catalyses N-(5-phospho-beta-D-ribosyl)anthranilate + diphosphate = 5-phospho-alpha-D-ribose 1-diphosphate + anthranilate. Its pathway is amino-acid biosynthesis; L-tryptophan biosynthesis; L-tryptophan from chorismate: step 2/5. Catalyzes the transfer of the phosphoribosyl group of 5-phosphorylribose-1-pyrophosphate (PRPP) to anthranilate to yield N-(5'-phosphoribosyl)-anthranilate (PRA). In Pectobacterium atrosepticum (strain SCRI 1043 / ATCC BAA-672) (Erwinia carotovora subsp. atroseptica), this protein is Anthranilate phosphoribosyltransferase.